Here is a 252-residue protein sequence, read N- to C-terminus: 2-succinyl-6-hydroxy-2,4-cyclohexadiene-1-carboxylate synthase (252 aa).

It belongs to the AB hydrolase superfamily. MenH family. In terms of assembly, monomer.

The catalysed reaction is 5-enolpyruvoyl-6-hydroxy-2-succinyl-cyclohex-3-ene-1-carboxylate = (1R,6R)-6-hydroxy-2-succinyl-cyclohexa-2,4-diene-1-carboxylate + pyruvate. It functions in the pathway quinol/quinone metabolism; 1,4-dihydroxy-2-naphthoate biosynthesis; 1,4-dihydroxy-2-naphthoate from chorismate: step 3/7. It participates in quinol/quinone metabolism; menaquinone biosynthesis. Catalyzes a proton abstraction reaction that results in 2,5-elimination of pyruvate from 2-succinyl-5-enolpyruvyl-6-hydroxy-3-cyclohexene-1-carboxylate (SEPHCHC) and the formation of 2-succinyl-6-hydroxy-2,4-cyclohexadiene-1-carboxylate (SHCHC). This is 2-succinyl-6-hydroxy-2,4-cyclohexadiene-1-carboxylate synthase from Salmonella typhi.